The following is a 603-amino-acid chain: Phosphogluconate dehydratase (603 aa).

Cys-154 and Cys-221 together coordinate [4Fe-4S] cluster.

This sequence belongs to the IlvD/Edd family. The cofactor is [4Fe-4S] cluster.

The enzyme catalyses 6-phospho-D-gluconate = 2-dehydro-3-deoxy-6-phospho-D-gluconate + H2O. The protein operates within carbohydrate metabolism; Entner-Doudoroff pathway. Functionally, catalyzes the dehydration of 6-phospho-D-gluconate to 2-dehydro-3-deoxy-6-phospho-D-gluconate. The protein is Phosphogluconate dehydratase of Escherichia coli O157:H7.